The sequence spans 432 residues: Enolase (432 aa).

Residue Q163 coordinates (2R)-2-phosphoglycerate. Catalysis depends on E205, which acts as the Proton donor. 3 residues coordinate Mg(2+): D242, E287, and D314. Residues K339, R368, S369, and K390 each coordinate (2R)-2-phosphoglycerate. The active-site Proton acceptor is K339.

It belongs to the enolase family. The cofactor is Mg(2+).

The protein localises to the cytoplasm. It localises to the secreted. It is found in the cell surface. The enzyme catalyses (2R)-2-phosphoglycerate = phosphoenolpyruvate + H2O. The protein operates within carbohydrate degradation; glycolysis; pyruvate from D-glyceraldehyde 3-phosphate: step 4/5. Its function is as follows. Catalyzes the reversible conversion of 2-phosphoglycerate (2-PG) into phosphoenolpyruvate (PEP). It is essential for the degradation of carbohydrates via glycolysis. This is Enolase from Myxococcus xanthus (strain DK1622).